Here is a 309-residue protein sequence, read N- to C-terminus: Homoserine O-succinyltransferase (309 aa).

Cys-142 (acyl-thioester intermediate) is an active-site residue. Substrate is bound by residues Lys-163 and Ser-192. His-235 functions as the Proton acceptor in the catalytic mechanism. Residue Glu-237 is part of the active site. Arg-249 lines the substrate pocket.

Belongs to the MetA family. Homodimer.

The protein localises to the cytoplasm. The enzyme catalyses L-homoserine + succinyl-CoA = O-succinyl-L-homoserine + CoA. It functions in the pathway amino-acid biosynthesis; L-methionine biosynthesis via de novo pathway; O-succinyl-L-homoserine from L-homoserine: step 1/1. Its function is as follows. Transfers a succinyl group from succinyl-CoA to L-homoserine, forming succinyl-L-homoserine. The chain is Homoserine O-succinyltransferase from Escherichia coli (strain SE11).